We begin with the raw amino-acid sequence, 150 residues long: Ribosomal RNA large subunit methyltransferase H (150 aa).

Residues Ala-100 and 118-123 (LSEMTF) each bind S-adenosyl-L-methionine.

This sequence belongs to the RNA methyltransferase RlmH family. Homodimer.

The protein resides in the cytoplasm. The enzyme catalyses pseudouridine(1915) in 23S rRNA + S-adenosyl-L-methionine = N(3)-methylpseudouridine(1915) in 23S rRNA + S-adenosyl-L-homocysteine + H(+). Specifically methylates the pseudouridine at position 1915 (m3Psi1915) in 23S rRNA. The sequence is that of Ribosomal RNA large subunit methyltransferase H from Helicobacter pylori (strain J99 / ATCC 700824) (Campylobacter pylori J99).